The following is a 335-amino-acid chain: DNA polymerase beta (335 aa).

Residue Lys-41 forms a Glycyl lysine isopeptide (Lys-Gly) (interchain with G-Cter in ubiquitin) linkage. Lys-60 is a binding site for K(+). Residue Lys-60 participates in Na(+) binding. A Glycyl lysine isopeptide (Lys-Gly) (interchain with G-Cter in ubiquitin) cross-link involves residue Lys-61. 2 residues coordinate K(+): Leu-62 and Val-65. 2 residues coordinate Na(+): Leu-62 and Val-65. Lys-72 functions as the Nucleophile; Schiff-base intermediate with DNA; for 5'-dRP lyase activity in the catalytic mechanism. At Lys-72 the chain carries N6-acetyllysine. Residue Lys-81 forms a Glycyl lysine isopeptide (Lys-Gly) (interchain with G-Cter in ubiquitin) linkage. Omega-N-methylarginine; by PRMT6 is present on Arg-83. Residues Thr-101, Val-103, and Ile-106 each coordinate K(+). The Na(+) site is built by Thr-101, Val-103, and Ile-106. Arg-149 is an a 2'-deoxyribonucleoside 5'-triphosphate binding site. Position 152 is an omega-N-methylarginine; by PRMT6 (Arg-152). 4 residues coordinate a 2'-deoxyribonucleoside 5'-triphosphate: Ser-180, Arg-183, Gly-189, and Asp-190. A DNA-binding region spans residues 183–192 (RGAESSGDMD). Residues Asp-190, Asp-192, and Asp-256 each contribute to the Mg(2+) site.

Belongs to the DNA polymerase type-X family. Monomer. Binds single-stranded DNA (ssDNA). Interacts with APEX1, LIG1, LIG3, FEN1, PCNA and XRCC1. Interacts with HUWE1/ARF-BP1, STUB1/CHIP and USP47. Interacts with FAM168A. Requires Mg(2+) as cofactor. In terms of processing, methylation by PRMT6 stimulates the polymerase activity by enhancing DNA binding and processivity. Ubiquitinated at Lys-41, Lys-61 and Lys-81: monoubiquitinated by HUWE1/ARF-BP1. Monoubiquitinated protein is then the target of STUB1/CHIP, which catalyzes polyubiquitination from monoubiquitin, leading to degradation by the proteasome. USP47 mediates the deubiquitination of monoubiquitinated protein, preventing polyubiquitination by STUB1/CHIP and its subsequent degradation.

The protein localises to the nucleus. It is found in the cytoplasm. The catalysed reaction is DNA(n) + a 2'-deoxyribonucleoside 5'-triphosphate = DNA(n+1) + diphosphate. The enzyme catalyses a 5'-end 2'-deoxyribose-2'-deoxyribonucleotide-DNA = (2E,4S)-4-hydroxypenten-2-al-5-phosphate + a 5'-end 5'-phospho-2'-deoxyribonucleoside-DNA + H(+). It carries out the reaction 2'-deoxyribonucleotide-(2'-deoxyribose 5'-phosphate)-2'-deoxyribonucleotide-DNA = a 3'-end 2'-deoxyribonucleotide-(2,3-dehydro-2,3-deoxyribose 5'-phosphate)-DNA + a 5'-end 5'-phospho-2'-deoxyribonucleoside-DNA + H(+). Its function is as follows. Repair polymerase that plays a key role in base-excision repair. During this process, the damaged base is excised by specific DNA glycosylases, the DNA backbone is nicked at the abasic site by an apurinic/apyrimidic (AP) endonuclease, and POLB removes 5'-deoxyribose-phosphate from the preincised AP site acting as a 5'-deoxyribose-phosphate lyase (5'-dRP lyase); through its DNA polymerase activity, it adds one nucleotide to the 3' end of the arising single-nucleotide gap. Conducts 'gap-filling' DNA synthesis in a stepwise distributive fashion rather than in a processive fashion as for other DNA polymerases. It is also able to cleave sugar-phosphate bonds 3' to an intact AP site, acting as an AP lyase. This Bos taurus (Bovine) protein is DNA polymerase beta (POLB).